The sequence spans 559 residues: Proline--tRNA ligase (559 aa).

Belongs to the class-II aminoacyl-tRNA synthetase family. ProS type 1 subfamily. As to quaternary structure, homodimer.

Its subcellular location is the cytoplasm. The catalysed reaction is tRNA(Pro) + L-proline + ATP = L-prolyl-tRNA(Pro) + AMP + diphosphate. Its function is as follows. Catalyzes the attachment of proline to tRNA(Pro) in a two-step reaction: proline is first activated by ATP to form Pro-AMP and then transferred to the acceptor end of tRNA(Pro). As ProRS can inadvertently accommodate and process non-cognate amino acids such as alanine and cysteine, to avoid such errors it has two additional distinct editing activities against alanine. One activity is designated as 'pretransfer' editing and involves the tRNA(Pro)-independent hydrolysis of activated Ala-AMP. The other activity is designated 'posttransfer' editing and involves deacylation of mischarged Ala-tRNA(Pro). The misacylated Cys-tRNA(Pro) is not edited by ProRS. The protein is Proline--tRNA ligase of Ruthia magnifica subsp. Calyptogena magnifica.